The chain runs to 360 residues: Ferrochelatase (360 aa).

Residues histidine 210 and glutamate 291 each contribute to the Fe cation site.

It belongs to the ferrochelatase family.

The protein resides in the cytoplasm. The catalysed reaction is heme b + 2 H(+) = protoporphyrin IX + Fe(2+). The protein operates within porphyrin-containing compound metabolism; protoheme biosynthesis; protoheme from protoporphyrin-IX: step 1/1. Catalyzes the ferrous insertion into protoporphyrin IX. The polypeptide is Ferrochelatase (Pseudoalteromonas atlantica (strain T6c / ATCC BAA-1087)).